Here is a 350-residue protein sequence, read N- to C-terminus: DNA-directed RNA polymerase subunit alpha (350 aa).

Residues 1–226 (MLISQRPTLS…ELFGLARELN (226 aa)) are alpha N-terminal domain (alpha-NTD). The alpha C-terminal domain (alpha-CTD) stretch occupies residues 241 to 350 (ADHIASFALP…NQDYAETEQL (110 aa)). Residues 328 to 350 (GTWTSDAGYDLDDNQDYAETEQL) form a disordered region. The segment covering 336–350 (YDLDDNQDYAETEQL) has biased composition (acidic residues).

The protein belongs to the RNA polymerase alpha chain family. Homodimer. The RNAP catalytic core consists of 2 alpha, 1 beta, 1 beta' and 1 omega subunit. When a sigma factor is associated with the core the holoenzyme is formed, which can initiate transcription.

It catalyses the reaction RNA(n) + a ribonucleoside 5'-triphosphate = RNA(n+1) + diphosphate. Functionally, DNA-dependent RNA polymerase catalyzes the transcription of DNA into RNA using the four ribonucleoside triphosphates as substrates. This Mycolicibacterium smegmatis (strain ATCC 700084 / mc(2)155) (Mycobacterium smegmatis) protein is DNA-directed RNA polymerase subunit alpha.